A 933-amino-acid polypeptide reads, in one-letter code: Progesterone receptor (933 aa).

Residues 1–164 (MTELKAKGPR…PATQGVLSPL (164 aa)) form an AF3; mediates transcriptional activation region. Positions 1–256 (MTELKAKGPR…AAAGGGAAAV (256 aa)) are disordered. Positions 1-566 (MTELKAKGPR…YSFESLPQKI (566 aa)) are modulating, Pro-Rich. At Ser-20 the chain carries Phosphoserine. An LXXL motif 1 motif is present at residues 55–59 (LDGLL). Phosphoserine is present on Ser-81. The LXXL motif 2 motif lies at 115 to 119 (LETLL). Phosphoserine occurs at positions 130 and 162. Positions 165-305 (MSRSGGKAGD…LATTVMDFIH (141 aa)) are mediates transcriptional transrepression. Residues 183 to 187 (KVLPR) carry the Nuclear localization signal motif. Residues Ser-190 and Ser-213 each carry the phosphoserine modification. Positions 220–231 (EVEEEDGSESEE) are enriched in acidic residues. The span at 232–246 (SAGPLLKGKPRALGG) shows a compositional bias: low complexity. Ser-294 carries the phosphoserine; by MAPK1 modification. The segment at 331 to 378 (GGAGAASAFAPPRSSPSASSTPVAVGDFPDCAYPPDAEPKDDAYPLYS) is disordered. Low complexity predominate over residues 335–350 (AASAFAPPRSSPSASS). Phosphoserine; by MAPK is present on Ser-345. Lys-388 is covalently cross-linked (Glycyl lysine isopeptide (Lys-Gly) (interchain with G-Cter in SUMO); alternate). A Glycyl lysine isopeptide (Lys-Gly) (interchain with G-Cter in ubiquitin); alternate cross-link involves residue Lys-388. Position 400 is a phosphoserine; by CDK2 (Ser-400). Residues 415–452 (PDFPLGPPPPLPPRAPPSRPGEAAVTAAPASASVSSAS) are disordered. The span at 418-433 (PLGPPPPLPPRAPPSR) shows a compositional bias: pro residues. Residues 434-452 (PGEAAVTAAPASASVSSAS) show a composition bias toward low complexity. The interval 456–546 (STLECILYKA…VYPPYLNYLR (91 aa)) is AF1; mediates transcriptional activation. Lys-531 participates in a covalent cross-link: Glycyl lysine isopeptide (Lys-Gly) (interchain with G-Cter in SUMO). 2 NR C4-type zinc fingers span residues 567–587 (CLIC…CGSC) and 603–627 (CAGR…LRKC). The segment at residues 567–639 (CLICGDEASG…AGMVLGGRKF (73 aa)) is a DNA-binding region (nuclear receptor). Phosphoserine is present on Ser-676. Residues 679–913 (QDIQLIPPLI…EFPEMMSEVI (235 aa)) form the NR LBD domain. Residues 687-933 (LINLLMSIEP…MVKPLLFHKK (247 aa)) are AF2; mediates transcriptional activation. Position 766 (Arg-766) interacts with progesterone.

The protein belongs to the nuclear hormone receptor family. Interacts with SMARD1 and UNC45A. Interacts with CUEDC2; the interaction promotes ubiquitination, decreases sumoylation, and represses transcriptional activity. Interacts with PIAS3; the interaction promotes sumoylation of PR in a hormone-dependent manner, inhibits DNA-binding, and alters nuclear export. Interacts with SP1; the interaction requires ligand-induced phosphorylation on Ser-345 by ERK1/2-MAPK. Interacts with PRMT2. Interacts with NCOA2 and NCOA1. Interacts with KLF9. Interacts with GTF2B. In terms of processing, phosphorylated on multiple serine sites. Several of these sites are hormone-dependent. Phosphorylation on Ser-294 is highly hormone-dependent and modulates ubiquitination and sumoylation on Lys-388. Phosphorylation on Ser-102 and Ser-345 also requires induction by hormone. Basal phosphorylation on Ser-81, Ser-162, Ser-190 and Ser-400 is increased in response to progesterone and can be phosphorylated in vitro by the CDK2-A1 complex. Increased levels of phosphorylation on Ser-400 also in the presence of EGF, heregulin, IGF, PMA and FBS. Phosphorylation at this site by CDK2 is ligand-independent, and increases nuclear translocation and transcriptional activity. Phosphorylation at Ser-162 and Ser-294, but not at Ser-190, is impaired during the G(2)/M phase of the cell cycle. Phosphorylation on Ser-345 by ERK1/2 MAPK is required for interaction with SP1. Sumoylation is hormone-dependent and represses transcriptional activity. Sumoylation on all three sites is enhanced by PIAS3. Desumoylated by SENP1. Sumoylation on Lys-388, the main site of sumoylation, is repressed by ubiquitination on the same site, and modulated by phosphorylation at Ser-294. Post-translationally, ubiquitination is hormone-dependent and represses sumoylation on the same site. Promoted by MAPK-mediated phosphorylation on Ser-294. Ubiquitinated by UBR5, leading to its degradation: UBR5 specifically recognizes and binds ligand-bound PGR when it is not associated with coactivators (NCOAs). In presence of NCOAs, the UBR5-degron is not accessible, preventing its ubiquitination and degradation. In terms of processing, palmitoylated by ZDHHC7 and ZDHHC21. Palmitoylation is required for plasma membrane targeting and for rapid intracellular signaling via ERK and AKT kinases and cAMP generation.

It localises to the nucleus. The protein localises to the cytoplasm. Its function is as follows. The steroid hormones and their receptors are involved in the regulation of eukaryotic gene expression and affect cellular proliferation and differentiation in target tissues. Transcriptional activator of several progesteron-dependent promoters in a variety of cell types. Involved in activation of SRC-dependent MAPK signaling on hormone stimulation. This chain is Progesterone receptor (PGR), found in Gorilla gorilla gorilla (Western lowland gorilla).